A 536-amino-acid polypeptide reads, in one-letter code: Protein ST7 homolog (536 aa).

2 consecutive transmembrane segments (helical) span residues 3-23 (CSWT…LFFL) and 49-69 (FYVA…IFEW). A coiled-coil region spans residues 192 to 219 (AEEDTETVAQAENVLRRALRAIENTLST). The chain crosses the membrane as a helical span at residues 464–484 (STLGMLIQTFACLAICILAVL).

The protein belongs to the ST7 family.

The protein localises to the membrane. The sequence is that of Protein ST7 homolog from Caenorhabditis briggsae.